A 298-amino-acid chain; its full sequence is Protease HtpX homolog (298 aa).

2 consecutive transmembrane segments (helical) span residues 14–34 and 39–59; these read ILVM…IGYL and VIGG…VIIG. His-144 serves as a coordination point for Zn(2+). Residue Glu-145 is part of the active site. His-148 is a binding site for Zn(2+). Helical transmembrane passes span 159-179 and 195-215; these read IALA…NFWW and IFAI…ATIA. Glu-224 provides a ligand contact to Zn(2+).

It belongs to the peptidase M48B family. It depends on Zn(2+) as a cofactor.

The protein localises to the cell membrane. The protein is Protease HtpX homolog of Limosilactobacillus reuteri (strain DSM 20016) (Lactobacillus reuteri).